We begin with the raw amino-acid sequence, 556 residues long: PPE family protein PPE2 (556 aa).

Positions 8–164 (ASPPEVHSAL…ASYQAVSTAA (157 aa)) are PPE. The segment at 201–256 (QKIGYTDFYNNVIQPFINWLTNLPFLQAMFSGFDPWLPSLGNPLTFLSPANIAFAL) is SH3-like. The leucine zipper motif stretch occupies residues 319–340 (LEQTLALLPAALPLLAAPLAPL). Disordered regions lie at residues 385 to 418 (TPTPAPAPAPTAVTAPTPPPGPPPPPVTAPPPVT) and 443 to 556 (GTGV…TRVE). The span at 400–417 (PTPPPGPPPPPVTAPPPV) shows a compositional bias: pro residues. Residues 456–471 (AEAPAAAAAPEEQVQP) are compositionally biased toward low complexity. Residues 472–481 (QRRRRPKIKQ) show a composition bias toward basic residues. The Nuclear localization signal signature appears at 473-481 (RRRRPKIKQ).

The protein belongs to the mycobacterial PPE family.

The protein resides in the secreted. It is found in the host cytoplasm. Its subcellular location is the host nucleus. Inhibits nitric oxide (NO) production in activated macrophages. Acts by inhibiting expression of the host inducible nitric oxide synthase (iNOS). PPE2 is translocated into the host macrophage nucleus, where it interacts with a GATA-binding site overlapping with the TATA box of NOS2 (iNOS) promoter, and strongly inhibits NOS2 gene transcription. Reduction in NO production in turn facilitates intracellular survival of the bacilli inside the macrophage. In addition, disrupts the assembly of NADPH oxidase complex, which inhibits NADPH oxidase-mediated reactive oxygen species (ROS) generation in macrophages and favors M.tuberculosis survival. Acts by interacting with NCF2, the cytosolic subunit of NADPH oxidase, and preventing translocation of NCF2 and NCF1 to the membrane, which causes a reduction of the functional assembly of NADPH oxidase complex and a decrease in NADPH oxidase activity. In Mycobacterium tuberculosis (strain ATCC 25618 / H37Rv), this protein is PPE family protein PPE2 (PPE2).